The following is a 301-amino-acid chain: MPIKVQNDLPAKKILEEENIFMMDEKRAMHQDIRPLKIAILNLMPLKEDTEVQLLRSLSNTPLQVDITFLTTDTYVGKNTATSHLEQFYLTHEDVKNRRFDGLIITGAPVEQMEFEEVAYWNELKKIMEWSKTHVTSTLHLCWGAQAGLYYHYGIKKYPLPDKMFGIFEHKLLNRKEPLVRGFDDVFLAPHSRHTETSREEILQNSDLTILAESEEAGVLIVMGGDGKHIFVMGHPEYDRITLDNEYKRDVNKGLEIQLPKNYYPSDDSMQRPNLSWRAHANALYTNWLNYYVYQVTPYEL.

Catalysis depends on C142, which acts as the Acyl-thioester intermediate. Substrate is bound by residues K163 and S192. H235 (proton acceptor) is an active-site residue. E237 is a catalytic residue. R249 contacts substrate.

This sequence belongs to the MetA family.

It is found in the cytoplasm. The enzyme catalyses L-homoserine + acetyl-CoA = O-acetyl-L-homoserine + CoA. The protein operates within amino-acid biosynthesis; L-methionine biosynthesis via de novo pathway; O-acetyl-L-homoserine from L-homoserine: step 1/1. Its function is as follows. Transfers an acetyl group from acetyl-CoA to L-homoserine, forming acetyl-L-homoserine. This Lachnoclostridium phytofermentans (strain ATCC 700394 / DSM 18823 / ISDg) (Clostridium phytofermentans) protein is Homoserine O-acetyltransferase.